Consider the following 343-residue polypeptide: NADP-dependent alkenal double bond reductase P2 (343 aa).

The substrate site is built by Y52 and Y79. Residues 164-167 (GAVG), K190, Y206, N230, 252-258 (CGMISQY), 282-284 (FVV), and N332 each bind NADP(+).

The protein belongs to the NADP-dependent oxidoreductase L4BD family. In terms of assembly, homodimer.

The catalysed reaction is an n-alkanal + NAD(+) = an alk-2-enal + NADH + H(+). It carries out the reaction an n-alkanal + NADP(+) = an alk-2-enal + NADPH + H(+). In terms of biological role, catalyzes the reduction of the 7-8 double bond of phenylpropanal substrates, such as p-coumaryl aldehyde and coniferyl aldehyde (in vitro). Has activity towards toxic substrates, such as 4-hydroxy-(2E)-nonenal (in vitro). May play a distinct role in plant antioxidant defense and is possibly involved in NAD(P)/NAD(P)h homeostasis. The sequence is that of NADP-dependent alkenal double bond reductase P2 (P2) from Arabidopsis thaliana (Mouse-ear cress).